A 348-amino-acid polypeptide reads, in one-letter code: Protein-glutamate methylesterase/protein-glutamine glutaminase 5 (348 aa).

The Response regulatory domain occupies 8 to 125; the sequence is RVLVVDDSAF…TERLYELGGE (118 aa). At aspartate 59 the chain carries 4-aspartylphosphate. Residues 157-348 form the CheB-type methylesterase domain; the sequence is RAAAKSLVVV…MLALLRRHVR (192 aa). Active-site residues include serine 169, histidine 196, and aspartate 292.

Belongs to the CheB family. In terms of processing, phosphorylated by CheA. Phosphorylation of the N-terminal regulatory domain activates the methylesterase activity.

Its subcellular location is the cytoplasm. The catalysed reaction is [protein]-L-glutamate 5-O-methyl ester + H2O = L-glutamyl-[protein] + methanol + H(+). It catalyses the reaction L-glutaminyl-[protein] + H2O = L-glutamyl-[protein] + NH4(+). Functionally, involved in chemotaxis. Part of a chemotaxis signal transduction system that modulates chemotaxis in response to various stimuli. Catalyzes the demethylation of specific methylglutamate residues introduced into the chemoreceptors (methyl-accepting chemotaxis proteins or MCP) by CheR. Also mediates the irreversible deamidation of specific glutamine residues to glutamic acid. The sequence is that of Protein-glutamate methylesterase/protein-glutamine glutaminase 5 from Myxococcus xanthus (strain DK1622).